The sequence spans 552 residues: Dihydroxy-acid dehydratase (552 aa).

Residue Asp78 coordinates Mg(2+). Cys119 is a [2Fe-2S] cluster binding site. The Mg(2+) site is built by Asp120 and Lys121. Lys121 carries the N6-carboxylysine modification. Residue Cys191 participates in [2Fe-2S] cluster binding. Residue Glu442 coordinates Mg(2+). The active-site Proton acceptor is Ser468.

Belongs to the IlvD/Edd family. As to quaternary structure, homodimer. The cofactor is [2Fe-2S] cluster. Mg(2+) serves as cofactor.

It catalyses the reaction (2R)-2,3-dihydroxy-3-methylbutanoate = 3-methyl-2-oxobutanoate + H2O. The catalysed reaction is (2R,3R)-2,3-dihydroxy-3-methylpentanoate = (S)-3-methyl-2-oxopentanoate + H2O. It functions in the pathway amino-acid biosynthesis; L-isoleucine biosynthesis; L-isoleucine from 2-oxobutanoate: step 3/4. It participates in amino-acid biosynthesis; L-valine biosynthesis; L-valine from pyruvate: step 3/4. Functions in the biosynthesis of branched-chain amino acids. Catalyzes the dehydration of (2R,3R)-2,3-dihydroxy-3-methylpentanoate (2,3-dihydroxy-3-methylvalerate) into 2-oxo-3-methylpentanoate (2-oxo-3-methylvalerate) and of (2R)-2,3-dihydroxy-3-methylbutanoate (2,3-dihydroxyisovalerate) into 2-oxo-3-methylbutanoate (2-oxoisovalerate), the penultimate precursor to L-isoleucine and L-valine, respectively. The protein is Dihydroxy-acid dehydratase of Clostridium botulinum (strain Eklund 17B / Type B).